The chain runs to 443 residues: Aspartic protease PEP3 (443 aa).

The signal sequence occupies residues 1 to 36; it reads MQNRPRVFDSAMNLSPNMHFLSLMPGLLLLSLQVHT. Residues 37 to 107 constitute a propeptide, activation peptide; it reads SPTPLKKTIR…NTVSKAMQAN (71 aa). Residues 123–440 enclose the Peptidase A1 domain; sequence YLSPVTIGGQ…DLRGPSLHVA (318 aa). Aspartate 139 is a catalytic residue. Asparagine 180 and asparagine 293 each carry an N-linked (GlcNAc...) asparagine glycan. Residue aspartate 327 is part of the active site. Cysteine 363 and cysteine 403 are disulfide-bonded. 2 N-linked (GlcNAc...) asparagine glycosylation sites follow: asparagine 364 and asparagine 388.

Belongs to the peptidase A1 family. As to quaternary structure, monomer.

Its subcellular location is the secreted. Secreted aspartic endopeptidase that allows assimilation of proteinaceous substrates. The scissile peptide bond is attacked by a nucleophilic water molecule activated by two aspartic residues in the active site. Shows a broad primary substrate specificity. Favors hydrophobic residues at the P1 and P1' positions. The sequence is that of Aspartic protease PEP3 from Coccidioides posadasii (strain C735) (Valley fever fungus).